We begin with the raw amino-acid sequence, 177 residues long: Bifunctional protein PyrR (177 aa).

The short motif at Ile-98–Thr-110 is the PRPP-binding element.

It belongs to the purine/pyrimidine phosphoribosyltransferase family. PyrR subfamily. In terms of assembly, homodimer and homohexamer; in equilibrium.

It catalyses the reaction UMP + diphosphate = 5-phospho-alpha-D-ribose 1-diphosphate + uracil. Regulates transcriptional attenuation of the pyrimidine nucleotide (pyr) operon by binding in a uridine-dependent manner to specific sites on pyr mRNA. This disrupts an antiterminator hairpin in the RNA and favors formation of a downstream transcription terminator, leading to a reduced expression of downstream genes. In terms of biological role, also displays a weak uracil phosphoribosyltransferase activity which is not physiologically significant. This Clostridium kluyveri (strain ATCC 8527 / DSM 555 / NBRC 12016 / NCIMB 10680 / K1) protein is Bifunctional protein PyrR.